An 869-amino-acid polypeptide reads, in one-letter code: MFRVLNKVFDNNQRDVQRIIKTVVDPVNALEQETMQIEDLAAAFLDLRRRVQEGGESLDDVLVPAFALIREAGRRSIGKRHYDVQLIGGAALHQGRIAEMRTGEGKTLVATLALSLNALEGRGCHLVTVNDYLARVGMEEMGLLYRTLGLTVGLASREMQPHEKQAAYACDITYVTNSELGFDYLRDNMAQSREALAMRAEHPLNYAIVDEVDSILIDEARTPLIISGAAEKATDLYYVYAKLIRRLQKGEPAEPGVRAEPTGDYTIDEKGKQVHITEAGISKIERLLSIPDLYSPENMDKAHMITQAIRAKELYHREKDYIINADGEVIIIDEFTGRSMPGRRYGEGLHQAIEAKENVKIENENQTLATITYQNFFRLYNKFAGMTGTAKTEEKEFLDIYGSDVLVIPTNRTILRKDSEDLVYRTKMGKYAAVVQEVAEMHATGRPVLIGTASIVTSEQLSDLLTQAGIRHSVLNAKFEAQEASIVAQAGRSGTVTIATNMAGRGTDIMLGGNAEFILGESIEQHLGISRFAPEAENFIKAISRQDPAAEMLGMQIPGMTPEFIQQAQQLQADTVADRARVQELGGLHIIGTERHESRRIDNQLRGRAGRQGDPGSSRFYVSFEDDLMRLFANDRVVAMMDRLGMDDSQPIEAKMVTGAIEKAQARVEDRNFSTRKQLLEFDNVMSKQRDTIYAQRREVLLGPDEDVEESTEGMIADFVDMQLAIHAPADQSPDAWDIEGLQAAIVDAVPQLEGFDFESLRHGSPAQAQDRLLSAVADAFDSRREELGSTMLNSLARYVLLQVVDQHWKEHLHGMDVLRQGIGLRGYGQRDPFTEYKFEATNMFNEMIDNLKSDVTKFIFRMQFGQTG.

ATP is bound by residues Q85, 103–107 (GEGKT), and D508.

It belongs to the SecA family. Monomer and homodimer. Part of the essential Sec protein translocation apparatus which comprises SecA, SecYEG and auxiliary proteins SecDF. Other proteins may also be involved.

Its subcellular location is the cell membrane. It is found in the cytoplasm. It catalyses the reaction ATP + H2O + cellular proteinSide 1 = ADP + phosphate + cellular proteinSide 2.. Part of the Sec protein translocase complex. Interacts with the SecYEG preprotein conducting channel. Has a central role in coupling the hydrolysis of ATP to the transfer of proteins into and across the cell membrane, serving as an ATP-driven molecular motor driving the stepwise translocation of polypeptide chains across the membrane. This chain is Protein translocase subunit SecA, found in Deinococcus deserti (strain DSM 17065 / CIP 109153 / LMG 22923 / VCD115).